We begin with the raw amino-acid sequence, 104 residues long: MEWICLIAAGILEMLGVTMMNQFHKDKRVRWIFLLIIGFAASFFLLSLAMETLPMGTAYAVWTGIGTVGGALVGILFYGEPKDGKRIFFIALILGSAVGLKLIS.

A run of 4 helical transmembrane segments spans residues 3-23, 31-51, 58-78, and 84-104; these read WICLIAAGILEMLGVTMMNQF, WIFLLIIGFAASFFLLSLAME, AYAVWTGIGTVGGALVGILFY, and GKRIFFIALILGSAVGLKLIS.

It belongs to the drug/metabolite transporter (DMT) superfamily. Small multidrug resistance (SMR) (TC 2.A.7.1) family. YkkC/YkkD subfamily. In terms of assembly, the efflux pump is composed of GdnC and GdnD.

Its subcellular location is the cell membrane. Functionally, probably involved in guanidinium transport. The polypeptide is Probable guanidinium efflux system subunit GdnD (Bacillus licheniformis (strain ATCC 14580 / DSM 13 / JCM 2505 / CCUG 7422 / NBRC 12200 / NCIMB 9375 / NCTC 10341 / NRRL NRS-1264 / Gibson 46)).